The primary structure comprises 509 residues: Bifunctional purine biosynthesis protein PurH (509 aa).

Residues 1-144 form the MGS-like domain; it reads MKRALISVSD…KNYAAVTVVV (144 aa).

This sequence belongs to the PurH family.

The catalysed reaction is (6R)-10-formyltetrahydrofolate + 5-amino-1-(5-phospho-beta-D-ribosyl)imidazole-4-carboxamide = 5-formamido-1-(5-phospho-D-ribosyl)imidazole-4-carboxamide + (6S)-5,6,7,8-tetrahydrofolate. It carries out the reaction IMP + H2O = 5-formamido-1-(5-phospho-D-ribosyl)imidazole-4-carboxamide. Its pathway is purine metabolism; IMP biosynthesis via de novo pathway; 5-formamido-1-(5-phospho-D-ribosyl)imidazole-4-carboxamide from 5-amino-1-(5-phospho-D-ribosyl)imidazole-4-carboxamide (10-formyl THF route): step 1/1. It functions in the pathway purine metabolism; IMP biosynthesis via de novo pathway; IMP from 5-formamido-1-(5-phospho-D-ribosyl)imidazole-4-carboxamide: step 1/1. This chain is Bifunctional purine biosynthesis protein PurH, found in Listeria monocytogenes serovar 1/2a (strain ATCC BAA-679 / EGD-e).